The primary structure comprises 342 residues: Holliday junction branch migration complex subunit RuvB (342 aa).

The large ATPase domain (RuvB-L) stretch occupies residues 1-179 (MTNILSPEKS…FGIPMRLNFY (179 aa)). ATP is bound by residues Ile18, Arg19, Gly60, Lys63, Thr64, Thr65, 126–128 (EDF), Arg169, Tyr179, and Arg216. Residue Thr64 coordinates Mg(2+). The segment at 180–250 (NTEELKQVLN…ICDFGLKRLT (71 aa)) is small ATPAse domain (RuvB-S). The tract at residues 253 to 342 (SIGLDSNDYR…NQLNILNENE (90 aa)) is head domain (RuvB-H). DNA-binding residues include Arg289, Arg308, and Arg313.

The protein belongs to the RuvB family. In terms of assembly, homohexamer. Forms an RuvA(8)-RuvB(12)-Holliday junction (HJ) complex. HJ DNA is sandwiched between 2 RuvA tetramers; dsDNA enters through RuvA and exits via RuvB. An RuvB hexamer assembles on each DNA strand where it exits the tetramer. Each RuvB hexamer is contacted by two RuvA subunits (via domain III) on 2 adjacent RuvB subunits; this complex drives branch migration. In the full resolvosome a probable DNA-RuvA(4)-RuvB(12)-RuvC(2) complex forms which resolves the HJ.

The protein localises to the cytoplasm. The catalysed reaction is ATP + H2O = ADP + phosphate + H(+). In terms of biological role, participates in UV-tolerance of Synechocystis PCC 6803. The RuvA-RuvB-RuvC complex processes Holliday junction (HJ) DNA during genetic recombination and DNA repair, while the RuvA-RuvB complex plays an important role in the rescue of blocked DNA replication forks via replication fork reversal (RFR). RuvA specifically binds to HJ cruciform DNA, conferring on it an open structure. The RuvB hexamer acts as an ATP-dependent pump, pulling dsDNA into and through the RuvAB complex. RuvB forms 2 homohexamers on either side of HJ DNA bound by 1 or 2 RuvA tetramers; 4 subunits per hexamer contact DNA at a time. Coordinated motions by a converter formed by DNA-disengaged RuvB subunits stimulates ATP hydrolysis and nucleotide exchange. Immobilization of the converter enables RuvB to convert the ATP-contained energy into a lever motion, pulling 2 nucleotides of DNA out of the RuvA tetramer per ATP hydrolyzed, thus driving DNA branch migration. The RuvB motors rotate together with the DNA substrate, which together with the progressing nucleotide cycle form the mechanistic basis for DNA recombination by continuous HJ branch migration. Branch migration allows RuvC to scan DNA until it finds its consensus sequence, where it cleaves and resolves cruciform DNA. This Rickettsia prowazekii (strain Madrid E) protein is Holliday junction branch migration complex subunit RuvB.